The primary structure comprises 210 residues: Imidazoleglycerol-phosphate dehydratase (210 aa).

Belongs to the imidazoleglycerol-phosphate dehydratase family.

It localises to the cytoplasm. It carries out the reaction D-erythro-1-(imidazol-4-yl)glycerol 3-phosphate = 3-(imidazol-4-yl)-2-oxopropyl phosphate + H2O. The protein operates within amino-acid biosynthesis; L-histidine biosynthesis; L-histidine from 5-phospho-alpha-D-ribose 1-diphosphate: step 6/9. This Mycobacterium leprae (strain Br4923) protein is Imidazoleglycerol-phosphate dehydratase.